The primary structure comprises 714 residues: Choline transporter-like protein 5 (714 aa).

Residues 1-33 (MGRRSAAPTSPFGEPRKFDPKFKGPIGKRHCTD) lie on the Cytoplasmic side of the membrane. The chain crosses the membrane as a helical span at residues 34-54 (VLCCIIFVVVILGYIALGVVA). Topologically, residues 55 to 237 (WIHGDPRKII…KIFEDYASSW (183 aa)) are extracellular. 4 N-linked (GlcNAc...) asparagine glycosylation sites follow: Asn-83, Asn-132, Asn-192, and Asn-205. A helical transmembrane segment spans residues 238–258 (YWILIALFIAMVVSLLFLILL). The Cytoplasmic segment spans residues 259 to 261 (RFT). A helical transmembrane segment spans residues 262–282 (AGVFFWIFIIGVIGVVGYGIW). The Extracellular portion of the chain corresponds to 283 to 320 (HCFWEYDSLKGVPGADLTIYDIGLQTDFRVYLQLRQTW). Residues 321-341 (LAFMILLCIVEVIIILMLIFL) traverse the membrane as a helical segment. At 342-346 (RNRIR) the chain is on the cytoplasmic side. A helical membrane pass occupies residues 347–367 (IAIALLQEGSRAIGYIMSTLF). The Extracellular segment spans residues 368 to 369 (YP). A helical transmembrane segment spans residues 370-390 (IITFILIAICISYWAVTAVFM). At 391–455 (ATSGEPIYKV…QYILIFQLCN (65 aa)) the chain is on the cytoplasmic side. Residues 456-476 (VFVFLWLVNFSIALGQCTLAG) traverse the membrane as a helical segment. At 477 to 510 (AFASYYWAFKKPADIPACPLFSSFGRAIRYHTGS) the chain is on the extracellular side. Residues 511 to 531 (LALGSLILALVQFIRIILEYL) traverse the membrane as a helical segment. The Cytoplasmic segment spans residues 532–605 (DHKLKASQNS…RVAVLDKVTD (74 aa)). Residues 606 to 626 (FLLFLGKVFVTGSVGVLAFFF) form a helical membrane-spanning segment. Residues 627–644 (FTRKIPVLTDEAPALNYY) lie on the Extracellular side of the membrane. A helical transmembrane segment spans residues 645-665 (WVPLLTVLIGSYLIAHGFFSV). Residues 666–711 (YAMCVDTLFLCFCEDLERNNGSSSKPYYMSPNLHRILGKKEILSKK) lie on the Cytoplasmic side of the membrane.

The protein belongs to the CTL (choline transporter-like) family.

Its subcellular location is the cell membrane. The catalysed reaction is choline(out) + n H(+)(in) = choline(in) + n H(+)(out). Choline/H+ antiporter. This chain is Choline transporter-like protein 5 (slc44a5), found in Xenopus tropicalis (Western clawed frog).